The following is a 3431-amino-acid chain: KICSTOR complex protein SZT2 (3431 aa).

Disordered regions lie at residues 699–731 (SKEP…PQQA), 1067–1101 (LRDP…TLPS), and 1162–1231 (KPKL…GADG). The segment at 1082 to 1188 (VAKDRAGNST…ATGTKATESQ (107 aa)) is mediates interaction with the GATOR1 complex. 2 stretches are compositionally biased toward polar residues: residues 1088-1101 (GNST…TLPS) and 1182-1212 (TKAT…TPSC). A Phosphoserine modification is found at Ser1275. The disordered stretch occupies residues 1356–1378 (PPSPGPLSPGPFSSSIEEGPEPR). Position 1415 is a phosphoserine (Ser1415). Disordered stretches follow at residues 1512 to 1534 (YRES…SDAD), 1629 to 1678 (PPAS…HPGL), 1806 to 1883 (RAED…PGET), 2113 to 2148 (PPSL…SDAV), 2450 to 2512 (TEAG…LEEG), 2735 to 2756 (ASPP…GGPL), and 2866 to 2899 (ETCA…DVPP). Thr1640 is subject to Phosphothreonine. A compositionally biased stretch (polar residues) spans 1641–1657 (SESSASFPRSPGQPSSL). Phosphoserine is present on Ser1650. Positions 1832–1854 (PLISLPSLSQGGSQPGPSRGLSL) are enriched in low complexity. Residues 2118 to 2129 (LSRSQEPISSED) are compositionally biased toward polar residues. A compositionally biased stretch (basic and acidic residues) spans 2460 to 2473 (TTDDIVLDRPEDTR). Residues 2739–2749 (LSREQGRLSGS) show a composition bias toward low complexity.

Part of the KICSTOR complex composed of KPTN, ITFG2, KICS2 and SZT2. SZT2 probably serves as a link between the other three proteins in the KICSTOR complex and may mediate the direct interaction with the GATOR complex via GATOR1. The KICSTOR complex interacts directly with the GATOR1 complex and most probably indirectly with the GATOR2 complex in an amino acid-independent manner. In terms of tissue distribution, mostly expressed in brain, spinal cord and lung.

The protein resides in the lysosome membrane. Its subcellular location is the peroxisome. Its function is as follows. As part of the KICSTOR complex functions in the amino acid-sensing branch of the TORC1 signaling pathway. Recruits, in an amino acid-independent manner, the GATOR1 complex to the lysosomal membranes and allows its interaction with GATOR2 and the RAG GTPases. Functions upstream of the RAG GTPases and is required to negatively regulate mTORC1 signaling in absence of amino acids. In absence of the KICSTOR complex mTORC1 is constitutively localized to the lysosome and activated. The KICSTOR complex is also probably involved in the regulation of mTORC1 by glucose. May play a role in the cellular response to oxidative stress. The polypeptide is KICSTOR complex protein SZT2 (Mus musculus (Mouse)).